Reading from the N-terminus, the 573-residue chain is Chaperone Ric-8 (573 aa).

A compositionally biased stretch (basic and acidic residues) spans 308–324 (ESHKEREQDNEKEKDTE). Disordered regions lie at residues 308–329 (ESHK…GAGA) and 473–493 (GTDY…QQQQ). A phosphoserine mark is found at serine 477, serine 478, serine 480, and serine 483.

This sequence belongs to the synembryn family. As to quaternary structure, interacts with GDP-bound G(i)-alpha protein G-i-alpha-65A. Does not interact with G-alpha proteins when they are in complex with subunits beta and gamma. Interacts with Frq2 in a Ca(2+)-independent manner but does not interact with Frq1. In terms of tissue distribution, expression in the embryo is primarily neural.

Its subcellular location is the cytoplasm. It is found in the cell cortex. The protein localises to the presynapse. Chaperone that specifically binds and folds some, but not all, nascent G alpha proteins prior to G protein heterotrimer formation, promoting their stability and activity. Also acts as a guanine nucleotide exchange factor (GEF) for G alpha proteins by stimulating exchange of bound GDP for free GTP. Plays a key role in asymmetric spindle positioning, a step for asymmetric cell division that generates cell diversity during development by activating G(i) alpha protein independently of G-protein coupled receptors. Required during gastrulation and sensory organ precursor (SOP) formation. Plays a role in positively regulating synapse number and neurotransmitter release. This Drosophila melanogaster (Fruit fly) protein is Chaperone Ric-8 (ric8a).